The primary structure comprises 166 residues: Small ribosomal subunit protein uS5 (166 aa).

The region spanning 11–74 (LQEKLIAVNR…EKARRNMINV (64 aa)) is the S5 DRBM domain.

Belongs to the universal ribosomal protein uS5 family. As to quaternary structure, part of the 30S ribosomal subunit. Contacts proteins S4 and S8.

With S4 and S12 plays an important role in translational accuracy. Its function is as follows. Located at the back of the 30S subunit body where it stabilizes the conformation of the head with respect to the body. The polypeptide is Small ribosomal subunit protein uS5 (Haemophilus influenzae (strain 86-028NP)).